The primary structure comprises 597 residues: Protein Spindly (597 aa).

An N-acetylmethionine modification is found at methionine 1. Residues 1–445 (MEADITNLRN…LKLKYEPEER (445 aa)) adopt a coiled-coil conformation. Phosphoserine occurs at positions 508 and 547. Positions 531 to 597 (PASTEVLHEQ…STPEMQCPQQ (67 aa)) are disordered. Residues 540 to 549 (QSGNTPSSPR) are compositionally biased toward polar residues. Residues 550–574 (LTEESRLPTKVKERKEATSKLEKGA) show a composition bias toward basic and acidic residues. Positions 583–597 (YVSSKSTPEMQCPQQ) are enriched in polar residues.

It belongs to the Spindly family. In terms of assembly, interacts with KNTC1 and ZW10. These interactions appear weak and may be transient or indirect. Interacts with dynein intermediate chain and dynactin (DCTN1). Interacts with the catalytically active form of USP45. In terms of processing, monoubiquitinated with'Lys-48' linkage. Deubiquitinated by USP45.

The protein resides in the cytoplasm. The protein localises to the cytoskeleton. Its subcellular location is the microtubule organizing center. It localises to the centrosome. It is found in the chromosome. The protein resides in the centromere. The protein localises to the kinetochore. Its subcellular location is the nucleus. It localises to the spindle pole. In terms of biological role, required for the localization of dynein and dynactin to the mitotic kintochore. Dynein is believed to control the initial lateral interaction between the kinetochore and spindle microtubules and to facilitate the subsequent formation of end-on kinetochore-microtubule attachments mediated by the NDC80 complex. Also required for correct spindle orientation. Does not appear to be required for the removal of spindle assembly checkpoint (SAC) proteins from the kinetochore upon bipolar spindle attachment. Acts as an adapter protein linking the dynein motor complex to various cargos and converts dynein from a non-processive to a highly processive motor in the presence of dynactin. Facilitates the interaction between dynein and dynactin and activates dynein processivity (the ability to move along a microtubule for a long distance without falling off the track). Plays a role in cell migration. This is Protein Spindly (Spdl1) from Rattus norvegicus (Rat).